Consider the following 335-residue polypeptide: MLP-like protein 28 (335 aa).

The protein belongs to the MLP family.

In terms of biological role, can bind steroids (in vitro), and may also bind other types of hydrophobic ligands. The sequence is that of MLP-like protein 28 (MLP28) from Arabidopsis thaliana (Mouse-ear cress).